The sequence spans 429 residues: Serine hydroxymethyltransferase (429 aa).

(6S)-5,6,7,8-tetrahydrofolate-binding positions include Leu125 and Gly129–Leu131. Lys234 bears the N6-(pyridoxal phosphate)lysine mark.

It belongs to the SHMT family. In terms of assembly, homodimer. Pyridoxal 5'-phosphate is required as a cofactor.

It localises to the cytoplasm. It catalyses the reaction (6R)-5,10-methylene-5,6,7,8-tetrahydrofolate + glycine + H2O = (6S)-5,6,7,8-tetrahydrofolate + L-serine. It participates in one-carbon metabolism; tetrahydrofolate interconversion. It functions in the pathway amino-acid biosynthesis; glycine biosynthesis; glycine from L-serine: step 1/1. Functionally, catalyzes the reversible interconversion of serine and glycine with tetrahydrofolate (THF) serving as the one-carbon carrier. This reaction serves as the major source of one-carbon groups required for the biosynthesis of purines, thymidylate, methionine, and other important biomolecules. Also exhibits THF-independent aldolase activity toward beta-hydroxyamino acids, producing glycine and aldehydes, via a retro-aldol mechanism. In Allorhizobium ampelinum (strain ATCC BAA-846 / DSM 112012 / S4) (Agrobacterium vitis (strain S4)), this protein is Serine hydroxymethyltransferase.